The following is a 248-amino-acid chain: Sperm-specific protein Don juan (248 aa).

A coiled-coil region spans residues 82–147 (KEGNQDELEN…EKKTKCAKKD (66 aa)). A disordered region spans residues 146–200 (KDPCKKKDPCKKKDPCKKKDPCKKKDPCKKKDPCKKKDPCKKKDPCKKKGGDLKK). 8 repeat units span residues 147–152 (DPCKKK), 153–158 (DPCKKK), 159–164 (DPCKKK), 165–170 (DPCKKK), 171–176 (DPCKKK), 177–182 (DPCKKK), 183–188 (DPCKKK), and 189–194 (DPCKKK). Residues 147-194 (DPCKKKDPCKKKDPCKKKDPCKKKDPCKKKDPCKKKDPCKKKDPCKKK) are 8 X 6 AA tandem repeat of D-P-C-K-K-K. A coiled-coil region spans residues 197–244 (DLKKKCKKLAEKEKCKKLAKKEKMKKLQKKCKKMAQKEKCKKMAKKDK).

As to expression, expression limited to post-meiotic male germ cells. Expressed in elongated spermatids during individualization and in finally elongated nuclei of spermatids. After completion of nuclear shaping it is no longer expressed in the sperm heads with the onset of individualization.

It localises to the nucleus. Its subcellular location is the mitochondrion. Functionally, may be involved in the final steps of mitochondrial differentiation within the flagellum. The polypeptide is Sperm-specific protein Don juan (dj) (Drosophila melanogaster (Fruit fly)).